The sequence spans 366 residues: Major outer membrane protein (366 aa).

The N-terminal stretch at 1-21 (MKKTLLATAIAGAMAASGAQA) is a signal peptide.

This sequence belongs to the Gram-negative porin family. As to quaternary structure, homotrimer.

It localises to the cell outer membrane. This chain is Major outer membrane protein, found in Halomonas elongata (strain ATCC 33173 / DSM 2581 / NBRC 15536 / NCIMB 2198 / 1H9).